The following is a 409-amino-acid chain: ORC1-type DNA replication protein 1 (409 aa).

Residues 63-67 (TGKTA), Y206, and R218 each bind ATP.

Belongs to the CDC6/cdc18 family.

Involved in regulation of DNA replication. The protein is ORC1-type DNA replication protein 1 (cdc6-1) of Archaeoglobus fulgidus (strain ATCC 49558 / DSM 4304 / JCM 9628 / NBRC 100126 / VC-16).